The following is a 403-amino-acid chain: Adenylate cyclase (403 aa).

Positions 1–16 are enriched in polar residues; sequence MSTEHTNTPRADSPQS. The tract at residues 1–37 is disordered; it reads MSTEHTNTPRADSPQSAAEAVRGARQHAPAATPAESD. Residues 31 to 60 are pyruvate binding; that stretch reads ATPAESDPILELAEAMEGPLRIPAHTPEAV. In terms of domain architecture, Guanylate cyclase spans 238 to 347; that stretch reads AVGFADLVSY…PTVNMAARLT (110 aa). Mg(2+) contacts are provided by D243 and D287.

The protein belongs to the adenylyl cyclase class-3 family. In terms of assembly, homodimer. It depends on Mg(2+) as a cofactor.

Its subcellular location is the cytoplasm. The catalysed reaction is ATP = 3',5'-cyclic AMP + diphosphate. Its activity is regulated as follows. Pyruvate-stimulated. Plays essential roles in regulation of cellular metabolism by catalyzing the synthesis of a second messenger, cAMP. The sequence is that of Adenylate cyclase (cya) from Glutamicibacter nicotianae (Arthrobacter nicotianae).